The following is a 1057-amino-acid chain: Outer capsid protein VP2 (1057 aa).

It belongs to the orbivirus VP2 family.

The protein localises to the virion. Its function is as follows. The VP2 protein is one of the two proteins (with VP5) which constitute the virus particle outer capsid. It is the major target of the host immunogenic response. The protein is Outer capsid protein VP2 (Segment-2) of Anas (ducks).